The following is a 252-amino-acid chain: 2-succinyl-6-hydroxy-2,4-cyclohexadiene-1-carboxylate synthase (252 aa).

It belongs to the AB hydrolase superfamily. MenH family. As to quaternary structure, monomer.

The catalysed reaction is 5-enolpyruvoyl-6-hydroxy-2-succinyl-cyclohex-3-ene-1-carboxylate = (1R,6R)-6-hydroxy-2-succinyl-cyclohexa-2,4-diene-1-carboxylate + pyruvate. Its pathway is quinol/quinone metabolism; 1,4-dihydroxy-2-naphthoate biosynthesis; 1,4-dihydroxy-2-naphthoate from chorismate: step 3/7. It functions in the pathway quinol/quinone metabolism; menaquinone biosynthesis. Catalyzes a proton abstraction reaction that results in 2,5-elimination of pyruvate from 2-succinyl-5-enolpyruvyl-6-hydroxy-3-cyclohexene-1-carboxylate (SEPHCHC) and the formation of 2-succinyl-6-hydroxy-2,4-cyclohexadiene-1-carboxylate (SHCHC). The polypeptide is 2-succinyl-6-hydroxy-2,4-cyclohexadiene-1-carboxylate synthase (Salmonella newport (strain SL254)).